Consider the following 260-residue polypeptide: DNA repair protein RecO (260 aa).

The protein belongs to the RecO family.

In terms of biological role, involved in DNA repair and RecF pathway recombination. The polypeptide is DNA repair protein RecO (Ligilactobacillus salivarius (strain UCC118) (Lactobacillus salivarius)).